A 486-amino-acid chain; its full sequence is CDT1-like protein b (486 aa).

Disordered regions lie at residues 273–294 (PEGG…PSRS) and 348–371 (VKDD…ASDD). Positions 281 to 294 (LRSTNSLARGPSRS) are enriched in polar residues. Residues 348–363 (VKDDISNESGDEKSNY) show a composition bias toward basic and acidic residues.

Belongs to the Cdt1 family. In terms of tissue distribution, expressed in proliferating (e.g. shoot and root apical meristems, organ primordia, guard cells and stomatal lineage) and endoreplicating cells (e.g. developing trichomes).

The protein resides in the nucleus. In terms of biological role, member of the pre-replication complex. Regulates endoreduplication. Involved in the coordination of cell and plastid division. The protein is CDT1-like protein b (CDT1B) of Arabidopsis thaliana (Mouse-ear cress).